Here is a 466-residue protein sequence, read N- to C-terminus: 20-hydroxyecdysone protein (466 aa).

An N-terminal signal peptide occupies residues 1-16; that stretch reads MKPVALILVFLAISQA. One copy of the 1; approximate repeat lies at 48–50; that stretch reads EVK. The 16 X repeats stretch occupies residues 48-157; that stretch reads EVKAEEVKPE…EIKKEATEIK (110 aa). Residues 53–55 form a 2; approximate repeat; the sequence is EVK. The interval 55 to 94 is disordered; the sequence is KPEEVKPIAQEEKAKDLKEEVKPEIKPEIKEQPKPDIKDE. The stretch at 58-60 is one 3; approximate repeat; that stretch reads EVK. One copy of the 4; approximate repeat lies at 70 to 72; the sequence is DLK. Residues 74 to 76 form a 5; approximate repeat; the sequence is EVK. A 6; approximate repeat occupies 78–80; it reads EIK. Residues 82–84 form a 7; approximate repeat; sequence EIK. Residues 90–92 form an 8; approximate repeat; sequence DIK. The 9; approximate repeat unit spans residues 94-96; the sequence is EIK. One copy of the 10; approximate repeat lies at 98 to 100; sequence DLK. An 11; approximate repeat occupies 102–104; the sequence is DIK. Residues 106–108 form a 12; approximate repeat; it reads ELK. Residues 119-220 form a disordered region; the sequence is PNAKPLELKE…QQSTTQGNFV (102 aa). The segment covering 124 to 160 has biased composition (basic and acidic residues); that stretch reads LELKEKSLEAEEKPQEIKEEVQQPEIKKEATEIKEEP. The 13; approximate repeat unit spans residues 125 to 127; the sequence is ELK. A 14; approximate repeat occupies 139-141; it reads EIK. The 15; approximate repeat unit spans residues 148–150; sequence EIK. Residues 155 to 157 form a 16; approximate repeat; that stretch reads EIK. Positions 170-180 are enriched in low complexity; the sequence is AEETVVVPAEE. Positions 185 to 194 are enriched in polar residues; it reads PVEQEQSENQ. Positions 203 to 216 are enriched in low complexity; the sequence is QATQATPTQQSTTQ. Residues Asn-294 and Asn-352 are each glycosylated (N-linked (GlcNAc...) asparagine). Positions 378–435 are disordered; it reads RPQNAPAAAPATQATEKPAVDDKIDPANDEVGEFVPESDNELRASGENIDDSFEDAGV. Residues 379–394 are compositionally biased toward low complexity; that stretch reads PQNAPAAAPATQATEK. Residues 404-416 are compositionally biased toward acidic residues; sequence ANDEVGEFVPESD.

It is found in the secreted. Functionally, probably has an essential role in embryogenesis, induces morphogenesis of imaginal disks, and may participate in multimolecular aggregates. This chain is 20-hydroxyecdysone protein (ImpE2), found in Drosophila melanogaster (Fruit fly).